Reading from the N-terminus, the 140-residue chain is Cysteine proteinase inhibitor 1 (140 aa).

The N-terminal stretch at 1 to 26 (MRKYRVAGLVAALLVLHSLATPSAQA) is a signal peptide. Positions 48–135 (GGVEPVGNEN…KELQEFKPVD (88 aa)) constitute a Cystatin domain. The short motif at 91 to 95 (QVVAG) is the Secondary area of contact element.

Belongs to the cystatin family. Phytocystatin subfamily.

It is found in the secreted. Its function is as follows. There are two distinct cystatins in rice seeds (Oryzacystatin-1 and -2) with different specificities against cysteine proteinases. May be involved in the control of germination by inhibition of endogenous cysteine proteinases. May play a role in defense by inhibiting exogenous proteases such as those present in digestive tracks of insects and nematodes. This Oryza sativa subsp. japonica (Rice) protein is Cysteine proteinase inhibitor 1.